A 187-amino-acid polypeptide reads, in one-letter code: Large ribosomal subunit protein uL5 (187 aa).

This sequence belongs to the universal ribosomal protein uL5 family. As to quaternary structure, part of the 50S ribosomal subunit; part of the 5S rRNA/L5/L18/L25 subcomplex. Contacts the 5S rRNA and the P site tRNA. Forms a bridge to the 30S subunit in the 70S ribosome.

Its function is as follows. This is one of the proteins that bind and probably mediate the attachment of the 5S RNA into the large ribosomal subunit, where it forms part of the central protuberance. In the 70S ribosome it contacts protein S13 of the 30S subunit (bridge B1b), connecting the 2 subunits; this bridge is implicated in subunit movement. Contacts the P site tRNA; the 5S rRNA and some of its associated proteins might help stabilize positioning of ribosome-bound tRNAs. This is Large ribosomal subunit protein uL5 from Gluconobacter oxydans (strain 621H) (Gluconobacter suboxydans).